The primary structure comprises 197 residues: Ribonuclease HII (197 aa).

Residues asparagine 11–leucine 197 form the RNase H type-2 domain. Residues aspartate 17, glutamate 18, and aspartate 109 each coordinate a divalent metal cation.

The protein belongs to the RNase HII family. The cofactor is Mn(2+). Mg(2+) serves as cofactor.

It localises to the cytoplasm. The catalysed reaction is Endonucleolytic cleavage to 5'-phosphomonoester.. In terms of biological role, endonuclease that specifically degrades the RNA of RNA-DNA hybrids. The polypeptide is Ribonuclease HII (Haemophilus ducreyi (strain 35000HP / ATCC 700724)).